We begin with the raw amino-acid sequence, 157 residues long: Ribosomal RNA large subunit methyltransferase H (157 aa).

S-adenosyl-L-methionine-binding positions include Leu73, Gly105, and 124-129 (MSKMTF).

This sequence belongs to the RNA methyltransferase RlmH family. Homodimer.

Its subcellular location is the cytoplasm. It catalyses the reaction pseudouridine(1915) in 23S rRNA + S-adenosyl-L-methionine = N(3)-methylpseudouridine(1915) in 23S rRNA + S-adenosyl-L-homocysteine + H(+). Functionally, specifically methylates the pseudouridine at position 1915 (m3Psi1915) in 23S rRNA. This chain is Ribosomal RNA large subunit methyltransferase H, found in Bacteroides thetaiotaomicron (strain ATCC 29148 / DSM 2079 / JCM 5827 / CCUG 10774 / NCTC 10582 / VPI-5482 / E50).